Here is a 1231-residue protein sequence, read N- to C-terminus: Complement factor H (1231 aa).

A signal peptide spans 1-18; it reads MRLLAKIICLMLWAICVA. 20 Sushi domains span residues 19–82, 83–143, 144–207, 208–264, 265–322, 324–386, 387–444, 446–507, 515–566, 567–625, 628–686, 689–746, 751–805, 809–866, 868–928, 929–986, 987–1045, 1046–1104, 1107–1165, and 1170–1230; these read EDCN…KCQK, RPCG…ICEV, VKCL…KCVE, ISCK…SCEE, KSCD…RCTL, PCDY…VPCL, RKCY…RCIR, KTCS…TCIK, MNAR…ICYE, RECE…ICKE, QSCG…VCIV, STCG…QCVA, KKCK…NCSM, QLCP…LCVE, IPCS…QCEG, LPCK…SCIK, TDCL…TCRD, TSCV…QCKD, GKCG…KCLH, and SREI…TCAK. 40 disulfide bridges follow: C21/C66, C52/C80, C85/C129, C114/C141, C146/C192, C178/C205, C210/C251, C237/C262, C267/C309, C294/C320, C325/C374, C357/C385, C389/C431, C416/C442, C448/C494, C477/C505, C509/C553, C536/C564, C569/C611, C597/C623, C630/C673, C659/C684, C691/C733, C719/C744, C753/C792, C781/C803, C811/C853, C839/C864, C870/C915, C901/C926, C931/C973, C959/C984, C989/C1032, C1018/C1043, C1048/C1091, C1077/C1102, C1109/C1152, C1138/C1163, C1167/C1218, and C1201/C1228. N217 is a glycosylation site (N-linked (GlcNAc...) (complex) asparagine). An N-linked (GlcNAc...) asparagine glycan is attached at N529. Residue N718 is glycosylated (N-linked (GlcNAc...) asparagine). 2 N-linked (GlcNAc...) asparagine glycosylation sites follow: N802 and N822. N-linked (GlcNAc...) (complex) asparagine glycosylation is found at N882 and N911. Residue N1029 is glycosylated (N-linked (GlcNAc...) (complex) asparagine). A glycan (N-linked (GlcNAc...) asparagine) is linked at N1095.

Homodimer. Also forms homooligomers. Interacts with complement protein C3b; this interaction inhibits complement activation. Interacts with complement protein C3d. Interacts with CR3/ITGAM; this interaction mediates adhesion of neutrophils to pathogens leading to pathogen clearance. Interacts with complement factor I. In terms of assembly, (Microbial infection) Interacts with West nile virus non-structural protein 1 (NS1); this interaction leads to the degradation of C3. As to quaternary structure, (Microbial infection) Interacts with C.albicans GPD2; the interaction is direct and leads to the degradation of C3 which enables the pathogen to evade the host innate immune system. (Microbial infection) Interacts with Neisseria meningitidis protein fHbp. In terms of assembly, (Microbial infection) Interacts with Borrelia burgdorferi outer surface protein E/OspE; this interaction recruits complement regulator factor H onto the bacterial surface to evade complement-mediated cell lysis. As to quaternary structure, (Microbial infection) Interacts with Streptococcus pneumoniae protein virulence factor choline-binding protein A/CbpAN; this interaction enables Streptococcus pneumoniae to evade surveillance by human complement system. (Microbial infection) Interacts with Staphylococcus aureus surface protein serine-aspartate repeat protein E/SdrE; this interaction sequesters CFH on the surface of S.aureus for complement evasion. In terms of assembly, (Microbial infection) Interacts with Staphylococcus aureus protein Sbi; this interaction inhibits the complement activation of the alternative pathway. As to quaternary structure, (Microbial infection) Interacts (via sushi 4-6 domains) with P.falciparum surface protein PF92; the interaction recruits CFH onto the merozoite surface preventing complement-mediated cell lysis. The interaction does not affect CFH activity. Interacts (via sushi 6-7 domains) with P.falciparum (strain NF54) GAP50; the interaction occurs in the vector mosquito midgut at the surface of the activated parasite gametocytes; the interaction protects the parasite from alternative complement pathway-mediated elimination. (Microbial infection) Interacts (via sushi 4-6 domains) with P.falciparum surface protein PF92; the interaction recruits FHL-1 isoform onto the merozoite surface preventing complement-mediated cell lysis. The interaction does not affect FHL-1 isoform activity. Interacts (via sushi 6-7 domains) with P.falciparum (strain NF54) GAP50; the interaction occurs in the vector mosquito midgut at the surface of the activated parasite gametocytes; the interaction protects the parasite from alternative complement pathway-mediated elimination. Sulfated on tyrosine residues. In terms of processing, according to a report, Asn-217 is not glycosylated. Another study observed glycosylation at this position. In terms of tissue distribution, expressed in the retinal pigment epithelium (at protein level). CFH is one of the most abundant complement components in blood where the liver is the major source of CFH protein in vivo. in addition, CFH is secreted by additional cell types including monocytes, fibroblasts, or endothelial cells.

It localises to the secreted. In terms of biological role, glycoprotein that plays an essential role in maintaining a well-balanced immune response by modulating complement activation. Acts as a soluble inhibitor of complement, where its binding to self markers such as glycan structures prevents complement activation and amplification on cell surfaces. Accelerates the decay of the complement alternative pathway (AP) C3 convertase C3bBb, thus preventing local formation of more C3b, the central player of the complement amplification loop. As a cofactor of the serine protease factor I, CFH also regulates proteolytic degradation of already-deposited C3b. In addition, mediates several cellular responses through interaction with specific receptors. For example, interacts with CR3/ITGAM receptor and thereby mediates the adhesion of human neutrophils to different pathogens. In turn, these pathogens are phagocytosed and destroyed. Its function is as follows. (Microbial infection) In the mosquito midgut, binds to the surface of parasite P.falciparum gametocytes and protects the parasite from alternative complement pathway-mediated elimination. The sequence is that of Complement factor H (CFH) from Homo sapiens (Human).